Consider the following 255-residue polypeptide: 3-deoxy-manno-octulosonate cytidylyltransferase (255 aa).

This sequence belongs to the KdsB family.

It is found in the cytoplasm. The enzyme catalyses 3-deoxy-alpha-D-manno-oct-2-ulosonate + CTP = CMP-3-deoxy-beta-D-manno-octulosonate + diphosphate. It participates in nucleotide-sugar biosynthesis; CMP-3-deoxy-D-manno-octulosonate biosynthesis; CMP-3-deoxy-D-manno-octulosonate from 3-deoxy-D-manno-octulosonate and CTP: step 1/1. Its pathway is bacterial outer membrane biogenesis; lipopolysaccharide biosynthesis. Functionally, activates KDO (a required 8-carbon sugar) for incorporation into bacterial lipopolysaccharide in Gram-negative bacteria. This is 3-deoxy-manno-octulosonate cytidylyltransferase from Hahella chejuensis (strain KCTC 2396).